The chain runs to 805 residues: Angiotensin-converting enzyme 2 (805 aa).

The N-terminal stretch at 1–17 (MSGSSWLLLSLVAVTAA) is a signal peptide. Residues 18-740 (QSTIEEQAKT…LGPPNQPPVS (723 aa)) are Extracellular-facing. Positions 19–607 (STIEEQAKTF…QNKNSFVGWS (589 aa)) constitute a Peptidase M2 domain. N-linked (GlcNAc...) asparagine glycosylation is found at N53, N90, and N103. A disulfide bridge connects residues C133 and C141. R169 contributes to the chloride binding site. R273 serves as a coordination point for substrate. N322 is a glycosylation site (N-linked (GlcNAc...) asparagine). C344 and C361 are disulfide-bonded. 345–346 (HP) contributes to the substrate binding site. H374 provides a ligand contact to Zn(2+). E375 (proton acceptor) is an active-site residue. Zn(2+) is bound by residues H378 and E402. The N-linked (GlcNAc...) asparagine glycan is linked to N432. Positions 477 and 481 each coordinate chloride. The Proton donor role is filled by H505. Substrate is bound at residue Y515. A disulfide bridge connects residues C530 and C542. N-linked (GlcNAc...) asparagine glycosylation occurs at N546. The Collectrin-like domain occupies 614-805 (ADQSIKVRIS…QNTDDVQTSF (192 aa)). The tract at residues 652–659 (RKYFLEVK) is essential for cleavage by ADAM17. N690 carries an N-linked (GlcNAc...) asparagine glycan. The tract at residues 697–716 (RTEVEKAIRMSRSRINDAFR) is essential for cleavage by TMPRSS11D and TMPRSS2. The helical transmembrane segment at 741–761 (IWLIVFGVVMGVIVVGIVVLI) threads the bilayer. Residues 762–805 (FTGIRDRKKKNKARNEENPYASIDISKGENNPGFQNTDDVQTSF) are Cytoplasmic-facing. Positions 772–805 (NKARNEENPYASIDISKGENNPGFQNTDDVQTSF) are disordered. The LIR motif lies at 778–786 (ENPYASIDI). Y781 is subject to Phosphotyrosine. Residues 781-784 (YASI) carry the Endocytic sorting signal motif. Residues 781 to 785 (YASID) carry the SH2-binding motif. S783 carries the post-translational modification Phosphoserine. K788 is covalently cross-linked (Glycyl lysine isopeptide (Lys-Gly) (interchain with G-Cter in ubiquitin)). A compositionally biased stretch (polar residues) spans 789-805 (GENNPGFQNTDDVQTSF). Residues 792–795 (NPGF) carry the PTB motif. The PDZ-binding motif lies at 803-805 (TSF).

This sequence belongs to the peptidase M2 family. In terms of assembly, homodimer. Interacts with the catalytically active form of TMPRSS2. Interacts with SLC6A19; this interaction is essential for expression and function of SLC6A19 in intestine. Interacts with ITGA5:ITGB1. Probably interacts (via endocytic sorting signal motif) with AP2M1; the interaction is inhibited by phosphorylation of Tyr-781. Interacts (via PDZ-binding motif) with NHERF1 (via PDZ domains); the interaction may enhance ACE2 membrane residence. The cofactor is Zn(2+). Chloride is required as a cofactor. Proteolytic cleavage by ADAM17 generates a secreted form. Also cleaved by serine proteases: TMPRSS2, TMPRSS11D and HPN/TMPRSS1. In terms of processing, phosphorylated. Phosphorylation at Tyr-781 probably inhibits interaction with AP2M1 and enables interactions with proteins containing SH2 domains. Post-translationally, ubiquitinated. Ubiquitinated on Lys-788 via 'Lys-48'-linked ubiquitin. 'Lys-48'-linked deubiquitinated by USP50 on the Lys-788; leading to its stabilization.

It is found in the secreted. The protein localises to the cell membrane. It localises to the cytoplasm. The protein resides in the cell projection. Its subcellular location is the cilium. It is found in the apical cell membrane. It carries out the reaction angiotensin II + H2O = angiotensin-(1-7) + L-phenylalanine. The catalysed reaction is angiotensin I + H2O = angiotensin-(1-9) + L-leucine. It catalyses the reaction bradykinin(1-8) + H2O = bradykinin(1-7) + L-phenylalanine. The enzyme catalyses neurotensin + H2O = neurotensin-(1-12) + L-leucine. It carries out the reaction kinetensin + H2O = kinetensin-(1-8) + L-leucine. The catalysed reaction is dynorphin A-(1-13) + H2O = dynorphin A-(1-12) + L-lysine. It catalyses the reaction apelin-13 + H2O = apelin-12 + L-phenylalanine. The enzyme catalyses [Pyr1]apelin-13 + H2O = [Pyr1]apelin-12 + L-phenylalanine. It carries out the reaction apelin-17 + H2O = apelin-16 + L-phenylalanine. Its function is as follows. Essential counter-regulatory carboxypeptidase of the renin-angiotensin hormone system that is a critical regulator of blood volume, systemic vascular resistance, and thus cardiovascular homeostasis. Converts angiotensin I to angiotensin 1-9, a nine-amino acid peptide with anti-hypertrophic effects in cardiomyocytes, and angiotensin II to angiotensin 1-7, which then acts as a beneficial vasodilator and anti-proliferation agent, counterbalancing the actions of the vasoconstrictor angiotensin II. Also removes the C-terminal residue from three other vasoactive peptides, neurotensin, kinetensin, and des-Arg bradykinin, but is not active on bradykinin. Also cleaves other biological peptides, such as apelins, casomorphins and dynorphin A. Plays an important role in amino acid transport by acting as binding partner of amino acid transporter SLC6A19 in intestine, regulating trafficking, expression on the cell surface, and its catalytic activity. In Pongo abelii (Sumatran orangutan), this protein is Angiotensin-converting enzyme 2 (ACE2).